Consider the following 133-residue polypeptide: Large ribosomal subunit protein bL17 (133 aa).

The protein belongs to the bacterial ribosomal protein bL17 family. In terms of assembly, part of the 50S ribosomal subunit. Contacts protein L32.

The sequence is that of Large ribosomal subunit protein bL17 from Verminephrobacter eiseniae (strain EF01-2).